Here is a 249-residue protein sequence, read N- to C-terminus: Precorrin-4 C(11)-methyltransferase (249 aa).

It belongs to the precorrin methyltransferase family.

The catalysed reaction is precorrin-4 + S-adenosyl-L-methionine = precorrin-5 + S-adenosyl-L-homocysteine. It functions in the pathway cofactor biosynthesis; adenosylcobalamin biosynthesis; cob(II)yrinate a,c-diamide from precorrin-2 (aerobic route): step 4/10. Its function is as follows. Catalyzes the methylation of C-11 in precorrin-4 to form precorrin-5. The chain is Precorrin-4 C(11)-methyltransferase (cobM) from Rhodococcus erythropolis (Arthrobacter picolinophilus).